The chain runs to 324 residues: MRLREFTALSSLLFSLLLLSASAEQCGSQAGGARCASGLCCSKFGWCGNTNDYCGPGNCQSQCPGGPTPPGGGDLGSIISSSMFDQMLKHRNDNACQGKGFYSYNAFINAARSFPGFGTSGDTTARKREIAAFFAQTSHETTGGWATAPDGPYAWGYCWLREQGSPGDYCTPSGQWPCAPGRKYFGRGPIQISHNYNYGPCGRAIGVDLLNNPDLVATDPVISFKSALWFWMTPQSPKPSCHDVIIGRWQPSSADRAANRLPGFGVITNIINGGLECGRGTDSRVQDRIGFYRRYCSILGVSPGDNLDCGNQRSFGNGLLVDTM.

A signal peptide spans 1-23 (MRLREFTALSSLLFSLLLLSASA). Residues 24–65 (EQCGSQAGGARCASGLCCSKFGWCGNTNDYCGPGNCQSQCPG) enclose the Chitin-binding type-1 domain. 4 disulfide bridges follow: C26–C41, C35–C47, C40–C54, and C59–C63. 4-hydroxyproline occurs at positions 67 and 69. Cystine bridges form between C96/C158, C170/C178, and C277/C309. E140 functions as the Proton donor in the catalytic mechanism. Positions 318-324 (GLLVDTM) are cleaved as a propeptide — removed in mature form.

Belongs to the glycosyl hydrolase 19 family. Chitinase class I subfamily. Post-translationally, the 4-hydroxyproline residues are not glycosylated in this plant vacuolar protein.

Its subcellular location is the vacuole. It catalyses the reaction Random endo-hydrolysis of N-acetyl-beta-D-glucosaminide (1-&gt;4)-beta-linkages in chitin and chitodextrins.. Functionally, defense against chitin-containing fungal pathogens. This chain is Endochitinase B (CHN50), found in Nicotiana tabacum (Common tobacco).